The chain runs to 202 residues: 3-isopropylmalate dehydratase small subunit (202 aa).

The protein belongs to the LeuD family. LeuD type 1 subfamily. As to quaternary structure, heterodimer of LeuC and LeuD.

It carries out the reaction (2R,3S)-3-isopropylmalate = (2S)-2-isopropylmalate. It functions in the pathway amino-acid biosynthesis; L-leucine biosynthesis; L-leucine from 3-methyl-2-oxobutanoate: step 2/4. In terms of biological role, catalyzes the isomerization between 2-isopropylmalate and 3-isopropylmalate, via the formation of 2-isopropylmaleate. The protein is 3-isopropylmalate dehydratase small subunit of Rhizobium etli (strain ATCC 51251 / DSM 11541 / JCM 21823 / NBRC 15573 / CFN 42).